The sequence spans 141 residues: Envelope glycoprotein L (141 aa).

The signal sequence occupies residues Met1 to Ala19. An interaction with gH region spans residues Ile21–Tyr131.

This sequence belongs to the herpesviridae glycoprotein L family. In terms of assembly, interacts with glycoprotein H (gH); this interaction is necessary for the correct processing and cell surface expression of gH. The heterodimer gH/gL seems to interact with gB trimers during fusion.

It is found in the virion membrane. It localises to the host cell membrane. Its subcellular location is the host Golgi apparatus. The protein localises to the host trans-Golgi network. The heterodimer glycoprotein H-glycoprotein L is required for the fusion of viral and plasma membranes leading to virus entry into the host cell. Acts as a functional inhibitor of gH and maintains gH in an inhibited form. Upon binding to host integrins, gL dissociates from gH leading to activation of the viral fusion glycoproteins gB and gH. This Saimiriine herpesvirus 2 (strain 11) (SaHV-2) protein is Envelope glycoprotein L.